A 247-amino-acid chain; its full sequence is GTP cyclohydrolase 1 type 2 homolog (247 aa).

Residues His63, His64, Asp101, His215, and Glu219 each coordinate a divalent metal cation.

It belongs to the GTP cyclohydrolase I type 2/NIF3 family. Toroid-shaped homohexamer. In the hexamer, 3 dimers assemble to form a ring-like structure surrounding a central hole.

Provides significant protection from radiation damage and may be involved in the degradation of radiation-damaged nucleotides. The protein is GTP cyclohydrolase 1 type 2 homolog (ybgI) of Escherichia coli O157:H7.